The chain runs to 427 residues: V-type proton ATPase subunit C 2 (427 aa).

The disordered stretch occupies residues proline 298–glycine 320.

Belongs to the V-ATPase C subunit family. V-ATPase is a heteromultimeric enzyme made up of two complexes: the ATP-hydrolytic V1 complex and the proton translocation V0 complex. The V1 complex consists of three catalytic AB heterodimers that form a heterohexamer, three peripheral stalks each consisting of EG heterodimers, one central rotor including subunits D and F, and the regulatory subunits C and H. The proton translocation complex V0 consists of the proton transport subunit a, a ring of proteolipid subunits c9c'', rotary subunit d, subunits e and f, and the accessory subunits ATP6AP1/Ac45 and ATP6AP2/PRR. As to expression, predominantly expressed in the lung and kidney. Isoform 1 is lung-specific while isoform 3 is a kidney-specific isoform. Isoform 1 is localized in the lamellar bodies of type II alveolar cells. Isoform 2 is strongly expressed in the cortical and medulla collecting ducts and is found in the plasma membranes of renal alpha and beta intercalated cells.

Subunit of the V1 complex of vacuolar(H+)-ATPase (V-ATPase), a multisubunit enzyme composed of a peripheral complex (V1) that hydrolyzes ATP and a membrane integral complex (V0) that translocates protons. V-ATPase is responsible for acidifying and maintaining the pH of intracellular compartments and in some cell types, is targeted to the plasma membrane, where it is responsible for acidifying the extracellular environment. Subunit C is necessary for the assembly of the catalytic sector of the enzyme and is likely to have a specific function in its catalytic activity. The chain is V-type proton ATPase subunit C 2 (Atp6v1c2) from Mus musculus (Mouse).